Reading from the N-terminus, the 357-residue chain is Cyclic AMP-responsive element-binding protein 5 (357 aa).

The segment at R114–T239 is disordered. Basic residues-rich tracts occupy residues H120–Q129 and P138–H175. Over residues T186–A195 the composition is skewed to polar residues. The span at T196 to Q206 shows a compositional bias: low complexity. Residues V218–R235 show a composition bias toward basic and acidic residues. A bZIP domain is found at D224–H287. A basic motif region spans residues R226 to K246. The leucine-zipper stretch occupies residues L252–L280. The disordered stretch occupies residues E298–S318.

The protein belongs to the bZIP family. As to quaternary structure, binds DNA as a homodimer or as a heterodimer with JUN or ATF2/CREBP1.

Its subcellular location is the nucleus. Binds to the cAMP response element and activates transcription. In Mus musculus (Mouse), this protein is Cyclic AMP-responsive element-binding protein 5 (Creb5).